The following is a 644-amino-acid chain: Exoribonuclease 2 (644 aa).

One can recognise an RNB domain in the interval 189 to 516 (REDLTALDFV…NHRLLKAVIK (328 aa)). One can recognise an S1 motif domain in the interval 561 to 643 (DTRFAAEIVD…ETRSIIARPV (83 aa)).

The protein belongs to the RNR ribonuclease family. RNase II subfamily.

The protein localises to the cytoplasm. The enzyme catalyses Exonucleolytic cleavage in the 3'- to 5'-direction to yield nucleoside 5'-phosphates.. Its function is as follows. Involved in mRNA degradation. Hydrolyzes single-stranded polyribonucleotides processively in the 3' to 5' direction. The chain is Exoribonuclease 2 from Escherichia coli O139:H28 (strain E24377A / ETEC).